Consider the following 124-residue polypeptide: Small ribosomal subunit protein uS12 (124 aa).

Position 89 is a 3-methylthioaspartic acid (aspartate 89).

It belongs to the universal ribosomal protein uS12 family. Part of the 30S ribosomal subunit. Contacts proteins S8 and S17. May interact with IF1 in the 30S initiation complex.

Its function is as follows. With S4 and S5 plays an important role in translational accuracy. Functionally, interacts with and stabilizes bases of the 16S rRNA that are involved in tRNA selection in the A site and with the mRNA backbone. Located at the interface of the 30S and 50S subunits, it traverses the body of the 30S subunit contacting proteins on the other side and probably holding the rRNA structure together. The combined cluster of proteins S8, S12 and S17 appears to hold together the shoulder and platform of the 30S subunit. The sequence is that of Small ribosomal subunit protein uS12 from Hamiltonella defensa subsp. Acyrthosiphon pisum (strain 5AT).